The following is a 967-amino-acid chain: MAKPRVHELAKELGITSKEAISKLQELGEFVRGASSTVEPPVAKKLRTAFPAGGDSAPAAKPAAKAPAQGVKKPAAAGPKPGAKAPAKPAASGNAARAEKPAASEAPKAAAASSEAPKSAAPQQGTAPAAASESSAPGTPASSAPRPGGATPGPRKSPAPGAKPGQSAPRPGNNPFASQQGMGRSEGGAQRGGPRPGGQQRSGKPGAPRPGNNPFAAQQGMRSANSGQGGPRPGGPRPGGPRPAQSGQGGPRPGAPRTGAPRQGQGGPRPGGPRPSPNMMPGQTTSVAPIGSRPAPGSGPRRGGGPGGGPGGGGGFRGRGGRGGTQGAFGRGGARGKHRKSKRAKRQELEQMSAPAVGGVSVPHGDGSTVVRLRRGASLMDFAEKINANPASLVTVLIHLGEMATQTQSLDEETFQLLGAELGYQIQVVSPEDEERELLESFDIDLDAELEAEGEDVLAPRPPVVTVMGHVDHGKTRLLDAIRNTKVIEGEAGGITQHIGAYQISTEVDGQERLITFIDTPGHEAFTAMRARGAQVTDIAVLVVAADDGVMPQTVEALNHAQAANVPIVVAVNKVDKPDANPDKIRGQLTEYGLVPEEYGGDTMFVDVSARENLNIDELLDAIVLTADGALELQATPDKNARGVAIEANLDKGRGAVCTVLVQSGTLKVGDSIVAGAAYGRVRAMFDEMGRTVEAATPSRPVQVLGLSTVPRAGDTFLATQEERTARQIAEKREAADRNAQLAKRRKRITLESFDEAVAEGKIDTLNLIIKGDVSGAVEALEDSLLKIDVGEEVQLRVIHRGVGAITQNDVNLATVDNAVIIGFNVRPAERVTELADREGVEMKFYSVIYNAIDEVESALKGMLKPEYEEVELGTAEIREVFRSSKWGNIAGAYVTKGLIRRNGKARLVRDGNVVQDNLSIDSLRRFKDDATEVREGYECGIGLGSFNDIHEGDIIETWEMREKPRD.

The segment at Ala-34–Pro-363 is disordered. Low complexity-rich tracts occupy residues Pro-51 to Ala-96 and Ala-103 to Pro-154. Residues Arg-184–Pro-196 show a composition bias toward gly residues. The segment covering Gly-197 to Gly-206 has biased composition (low complexity). A compositionally biased stretch (gly residues) spans Pro-300 to Gly-333. The segment covering Ala-334 to Lys-345 has biased composition (basic residues). Residues Pro-460–Glu-632 enclose the tr-type G domain. The interval Gly-469 to Thr-476 is G1. Gly-469–Thr-476 provides a ligand contact to GTP. The G2 stretch occupies residues Gly-494–His-498. Residues Asp-519–Gly-522 form a G3 region. Residues Asp-519–His-523 and Asn-573–Asp-576 each bind GTP. The G4 stretch occupies residues Asn-573–Asp-576. The segment at Ser-609–Arg-611 is G5.

It belongs to the TRAFAC class translation factor GTPase superfamily. Classic translation factor GTPase family. IF-2 subfamily.

The protein resides in the cytoplasm. One of the essential components for the initiation of protein synthesis. Protects formylmethionyl-tRNA from spontaneous hydrolysis and promotes its binding to the 30S ribosomal subunits. Also involved in the hydrolysis of GTP during the formation of the 70S ribosomal complex. The protein is Translation initiation factor IF-2 of Kocuria rhizophila (strain ATCC 9341 / DSM 348 / NBRC 103217 / DC2201).